Consider the following 310-residue polypeptide: ADP-L-glycero-D-manno-heptose-6-epimerase (310 aa).

NADP(+) is bound by residues 10-11 (FI), 31-32 (DN), K38, K53, 75-79 (EGACS), and N92. Y140 acts as the Proton acceptor in catalysis. K144 serves as a coordination point for NADP(+). Residue N169 participates in substrate binding. Residues V170 and K178 each contribute to the NADP(+) site. The active-site Proton acceptor is the K178. Substrate contacts are provided by residues S180, H187, 201 to 204 (FEGS), R209, and Y272.

It belongs to the NAD(P)-dependent epimerase/dehydratase family. HldD subfamily. In terms of assembly, homopentamer. NADP(+) serves as cofactor.

The enzyme catalyses ADP-D-glycero-beta-D-manno-heptose = ADP-L-glycero-beta-D-manno-heptose. The protein operates within nucleotide-sugar biosynthesis; ADP-L-glycero-beta-D-manno-heptose biosynthesis; ADP-L-glycero-beta-D-manno-heptose from D-glycero-beta-D-manno-heptose 7-phosphate: step 4/4. In terms of biological role, catalyzes the interconversion between ADP-D-glycero-beta-D-manno-heptose and ADP-L-glycero-beta-D-manno-heptose via an epimerization at carbon 6 of the heptose. This is ADP-L-glycero-D-manno-heptose-6-epimerase from Salmonella paratyphi C (strain RKS4594).